The primary structure comprises 268 residues: Acidic leucine-rich nuclear phosphoprotein 32 family member E (268 aa).

Methionine 1 carries the N-acetylmethionine modification. LRR repeat units lie at residues 18–38, 43–64, 65–87, and 89–110; these read EVTELVLDNCLCVNGEIEGLN, ELEFLSMANVELSSLARLPSLN, KLRKLELSDNIISGGLEVLAEKC, and NLTYLNLSGNKIKDLSTVEALQ. Lysine 68 participates in a covalent cross-link: Glycyl lysine isopeptide (Lys-Gly) (interchain with G-Cter in SUMO2). The region spanning 123-161 is the LRRCT domain; that stretch reads CEITNLEDYRESIFELLQQITYLDGFDQEDNEAPDSEEE. Composition is skewed to acidic residues over residues 149 to 216 and 226 to 247; these read DQED…EEEV and IQDEEDDDDYVEEGEEEEEEEE. Residues 149–268 are disordered; sequence DQEDNEAPDS…AEDDGEEEDD (120 aa). Positions 215 to 268 are ZID domain; it reads EVGLSYLMKEEIQDEEDDDDYVEEGEEEEEEEEGGLRGEKRKRDAEDDGEEEDD. Residues 248–259 are compositionally biased toward basic and acidic residues; sequence GGLRGEKRKRDA.

The protein belongs to the ANP32 family. Interacts with the importin alpha KPNA1 and KPNA2. Component of a SWR1-like complex, composed of EP400, KAT5/TIP60, TRRAP, BRD8, RUVBL1, RUVBL2, ING3 and ANP32E; the complex does not contain SRCAP. Interacts with H2A.Z/H2AZ1. In terms of processing, phosphorylated. The phosphorylation is nuclear localization signal (NLS)-dependent. As to expression, expressed in peripheral blood leukocytes, colon, small intestine, prostate, thymus, spleen, skeletal muscle, liver and kidney.

The protein localises to the cytoplasm. Its subcellular location is the nucleus. Functionally, histone chaperone that specifically mediates the genome-wide removal of histone H2A.Z/H2AZ1 from the nucleosome: removes H2A.Z/H2AZ1 from its normal sites of deposition, especially from enhancer and insulator regions. Not involved in deposition of H2A.Z/H2AZ1 in the nucleosome. May stabilize the evicted H2A.Z/H2AZ1-H2B dimer, thus shifting the equilibrium towards dissociation and the off-chromatin state. Inhibits activity of protein phosphatase 2A (PP2A). Does not inhibit protein phosphatase 1. May play a role in cerebellar development and synaptogenesis. The protein is Acidic leucine-rich nuclear phosphoprotein 32 family member E (ANP32E) of Homo sapiens (Human).